The following is a 279-amino-acid chain: High choriolytic enzyme 2 (279 aa).

Residues 1 to 20 form the signal peptide; that stretch reads MNLASSACLLLLFLLGIAQA. Positions 21 to 79 are cleaved as a propeptide — activation peptide; sequence LPVQNEEGHEEGNKEGHGEEGVEEGDEDDFVDFTTRILTSNNNTDQLLLEGDLVAPTNR. Basic and acidic residues predominate over residues 26 to 40; that stretch reads EEGHEEGNKEGHGEE. The tract at residues 26–46 is disordered; it reads EEGHEEGNKEGHGEEGVEEGD. Asn62 carries an N-linked (GlcNAc...) asparagine glycan. The Peptidase M12A domain occupies 80 to 279; sequence NAMKCWYNSC…TRSNVLYNCR (200 aa). 3 disulfides stabilise this stretch: Cys84-Cys89, Cys129-Cys278, and Cys150-Cys170. Zn(2+) is bound at residue His178. Residue Glu179 is part of the active site. Positions 182 and 188 each coordinate Zn(2+).

Zn(2+) is required as a cofactor.

The protein resides in the zymogen granule. The catalysed reaction is Hydrolysis of the inner layer of fish egg envelope. Also hydrolysis of casein and small molecule substrates such as succinyl-Leu-Leu-Val-Tyr-|-7-(4-methyl)coumarylamide.. Participates in the breakdown of the egg envelope, which is derived from the egg extracellular matrix, at the time of hatching. Thus allowing the newly hatched fish to swim free. HCE binds tightly to the egg envelope while it exerts the choriolytic swelling action. In Oryzias latipes (Japanese rice fish), this protein is High choriolytic enzyme 2 (hceb).